The primary structure comprises 238 residues: uncharacterized protein (238 aa).

7 consecutive transmembrane segments (helical) span residues 15–37, 50–69, 79–96, 101–118, 128–150, 163–183, and 203–225; these read FGALHFAIASVAVLLSALFVLLP, ARAGVAILFLRLGLMLCGTL, LPFHLCPAALISGSLYFI, IFFNLLYFWHFGSFVAVL, ILYAYLFMLTHCLEPAMVVFSLL, CAVLGFLLLAANALFWNRRLG, and FFVYQLLFVSALCLLMLVLYLPF.

The protein resides in the cell membrane. This is an uncharacterized protein from Treponema pallidum (strain Nichols).